The sequence spans 379 residues: Anhydro-N-acetylmuramic acid kinase (379 aa).

9-16 serves as a coordination point for ATP; that stretch reads GTSADGVD.

This sequence belongs to the anhydro-N-acetylmuramic acid kinase family.

It catalyses the reaction 1,6-anhydro-N-acetyl-beta-muramate + ATP + H2O = N-acetyl-D-muramate 6-phosphate + ADP + H(+). Its pathway is amino-sugar metabolism; 1,6-anhydro-N-acetylmuramate degradation. It participates in cell wall biogenesis; peptidoglycan recycling. Its function is as follows. Catalyzes the specific phosphorylation of 1,6-anhydro-N-acetylmuramic acid (anhMurNAc) with the simultaneous cleavage of the 1,6-anhydro ring, generating MurNAc-6-P. Is required for the utilization of anhMurNAc either imported from the medium or derived from its own cell wall murein, and thus plays a role in cell wall recycling. This chain is Anhydro-N-acetylmuramic acid kinase, found in Prochlorococcus marinus (strain MIT 9313).